We begin with the raw amino-acid sequence, 297 residues long: Esterase LipU (297 aa).

Residues serine 140, glutamate 239, and histidine 269 contribute to the active site.

The protein belongs to the 'GDXG' lipolytic enzyme family.

Its subcellular location is the secreted. The enzyme catalyses a fatty acid ester + H2O = an aliphatic alcohol + a fatty acid + H(+). The catalysed reaction is a butanoate ester + H2O = an aliphatic alcohol + butanoate + H(+). It catalyses the reaction an acetyl ester + H2O = an aliphatic alcohol + acetate + H(+). It carries out the reaction decanoate ester + H2O = decanoate + an aliphatic alcohol + H(+). The enzyme catalyses an octanoate ester + H2O = an aliphatic alcohol + octanoate + H(+). The catalysed reaction is a dodecanoate ester + H2O = an aliphatic alcohol + dodecanoate + H(+). It catalyses the reaction hexadecanoate ester + H2O = an aliphatic alcohol + hexadecanoate + H(+). Its activity is regulated as follows. Inhibited by the ionic detergent SDS and by the serine protease inhibitor PMSF. Inhibited by the FDA approved drugs Diosmin, Acarbose and Ouabain. These drugs remain bound in the active site pocket and could be probable drug candidates to combat TB disease. Esterase that shows preference for short chain fatty acids. Contributes to the growth of M.tuberculosis during the nutritive stress. Elicits strong humoral response in both extrapulmonary and relapsed cases of tuberculosis patients. This is Esterase LipU from Mycobacterium tuberculosis (strain ATCC 25618 / H37Rv).